The chain runs to 391 residues: Putative ABC transporter glucose-binding protein TsgA13 (391 aa).

Residues 1–28 (MLDEESSIQRRDVLSALGAAGVTTLAGC) form the signal peptide. Residues 24 to 71 (TLAGCTGGDTGDTDDTEASETTASEGTTSGTTTGDVETTDGGGPSEGE) are disordered. A compositionally biased stretch (low complexity) spans 42 to 59 (SETTASEGTTSGTTTGDV).

Belongs to the BMP lipoprotein family. As to quaternary structure, the complex is composed of two ATP-binding proteins (TsgD13), two transmembrane proteins (TsgB13 and TsgC13) and a solute-binding protein (TsgA13).

In terms of biological role, part of an ABC transporter complex involved in glucose import. In Haloferax volcanii (strain ATCC 29605 / DSM 3757 / JCM 8879 / NBRC 14742 / NCIMB 2012 / VKM B-1768 / DS2) (Halobacterium volcanii), this protein is Putative ABC transporter glucose-binding protein TsgA13 (tsgA13).